The following is a 434-amino-acid chain: Enolase (434 aa).

Position 163 (Q163) interacts with (2R)-2-phosphoglycerate. Residue E205 is the Proton donor of the active site. Positions 242, 291, and 318 each coordinate Mg(2+). Residues K343, R372, S373, and K394 each coordinate (2R)-2-phosphoglycerate. Residue K343 is the Proton acceptor of the active site.

The protein belongs to the enolase family. Mg(2+) serves as cofactor.

The protein localises to the cytoplasm. It localises to the secreted. It is found in the cell surface. It catalyses the reaction (2R)-2-phosphoglycerate = phosphoenolpyruvate + H2O. The protein operates within carbohydrate degradation; glycolysis; pyruvate from D-glyceraldehyde 3-phosphate: step 4/5. Catalyzes the reversible conversion of 2-phosphoglycerate (2-PG) into phosphoenolpyruvate (PEP). It is essential for the degradation of carbohydrates via glycolysis. This is Enolase from Streptococcus intermedius.